Consider the following 366-residue polypeptide: Cobalt-precorrin-5B C(1)-methyltransferase (366 aa).

This sequence belongs to the CbiD family.

It catalyses the reaction Co-precorrin-5B + S-adenosyl-L-methionine = Co-precorrin-6A + S-adenosyl-L-homocysteine. Its pathway is cofactor biosynthesis; adenosylcobalamin biosynthesis; cob(II)yrinate a,c-diamide from sirohydrochlorin (anaerobic route): step 6/10. Catalyzes the methylation of C-1 in cobalt-precorrin-5B to form cobalt-precorrin-6A. The chain is Cobalt-precorrin-5B C(1)-methyltransferase from Methanococcus maripaludis (strain C7 / ATCC BAA-1331).